A 198-amino-acid chain; its full sequence is NAD(P)H dehydrogenase (quinone) (198 aa).

Residues 4–189 (VLVLYYSMYG…SIARYQGEYV (186 aa)) form the Flavodoxin-like domain. Residues 10–15 (SMYGHI) and 78–80 (TRF) contribute to the FMN site. NAD(+) is bound at residue tyrosine 12. Tryptophan 98 provides a ligand contact to substrate. FMN-binding positions include 113–118 (STGTGG) and histidine 133.

The protein belongs to the WrbA family. Requires FMN as cofactor.

The catalysed reaction is a quinone + NADH + H(+) = a quinol + NAD(+). It carries out the reaction a quinone + NADPH + H(+) = a quinol + NADP(+). This is NAD(P)H dehydrogenase (quinone) from Escherichia fergusonii (strain ATCC 35469 / DSM 13698 / CCUG 18766 / IAM 14443 / JCM 21226 / LMG 7866 / NBRC 102419 / NCTC 12128 / CDC 0568-73).